A 454-amino-acid chain; its full sequence is tRNA modification GTPase MnmE (454 aa).

(6S)-5-formyl-5,6,7,8-tetrahydrofolate contacts are provided by arginine 23, glutamate 80, and lysine 120. The TrmE-type G domain occupies 216–377 (GMKVVIAGRP…LRNHLKQSMG (162 aa)). A K(+)-binding site is contributed by asparagine 226. GTP-binding positions include 226–231 (NAGKSS), 245–251 (TDIAGTT), 270–273 (DTAG), 335–338 (NKAD), and 358–360 (SAR). Serine 230 contributes to the Mg(2+) binding site. K(+) contacts are provided by threonine 245, isoleucine 247, and threonine 250. Threonine 251 is a binding site for Mg(2+). Lysine 454 contacts (6S)-5-formyl-5,6,7,8-tetrahydrofolate.

The protein belongs to the TRAFAC class TrmE-Era-EngA-EngB-Septin-like GTPase superfamily. TrmE GTPase family. In terms of assembly, homodimer. Heterotetramer of two MnmE and two MnmG subunits. K(+) serves as cofactor.

It localises to the cytoplasm. Its function is as follows. Exhibits a very high intrinsic GTPase hydrolysis rate. Involved in the addition of a carboxymethylaminomethyl (cmnm) group at the wobble position (U34) of certain tRNAs, forming tRNA-cmnm(5)s(2)U34. This is tRNA modification GTPase MnmE from Escherichia coli O127:H6 (strain E2348/69 / EPEC).